We begin with the raw amino-acid sequence, 269 residues long: Glutamate racemase (269 aa).

Residues Asp-11 to Ser-12 and Tyr-43 to Gly-44 each bind substrate. The active-site Proton donor/acceptor is Cys-74. Asn-75 to Thr-76 serves as a coordination point for substrate. Cys-185 (proton donor/acceptor) is an active-site residue. Thr-186–His-187 contributes to the substrate binding site.

Belongs to the aspartate/glutamate racemases family.

It catalyses the reaction L-glutamate = D-glutamate. It participates in cell wall biogenesis; peptidoglycan biosynthesis. Functionally, provides the (R)-glutamate required for cell wall biosynthesis. In Bacillus cereus (strain G9842), this protein is Glutamate racemase.